Reading from the N-terminus, the 161-residue chain is Small ribosomal subunit protein uS19 (161 aa).

Residues 1-19 (MARQKKYSGKGGARKKNKQ) are compositionally biased toward basic residues. A disordered region spans residues 1–26 (MARQKKYSGKGGARKKNKQKQSVAPR).

The protein belongs to the universal ribosomal protein uS19 family.

Protein S19 forms a complex with S13 that binds strongly to the 16S ribosomal RNA. This Methanococcus maripaludis (strain C6 / ATCC BAA-1332) protein is Small ribosomal subunit protein uS19.